We begin with the raw amino-acid sequence, 639 residues long: Chaperone protein DnaK (639 aa).

A Phosphothreonine; by autocatalysis modification is found at Thr198. Residues 601–639 (AQQAPGADSCGGDCGQQQEAGAKPKDEKVVDADFEEVKK) are disordered. The span at 622–639 (AKPKDEKVVDADFEEVKK) shows a compositional bias: basic and acidic residues.

It belongs to the heat shock protein 70 family.

Acts as a chaperone. This Trichlorobacter lovleyi (strain ATCC BAA-1151 / DSM 17278 / SZ) (Geobacter lovleyi) protein is Chaperone protein DnaK.